Here is a 116-residue protein sequence, read N- to C-terminus: Iron-sulfur cluster insertion protein ErpA (116 aa).

C44, C108, and C110 together coordinate iron-sulfur cluster.

The protein belongs to the HesB/IscA family. In terms of assembly, homodimer. Iron-sulfur cluster is required as a cofactor.

Functionally, required for insertion of 4Fe-4S clusters for at least IspG. This is Iron-sulfur cluster insertion protein ErpA from Shewanella halifaxensis (strain HAW-EB4).